Here is a 442-residue protein sequence, read N- to C-terminus: D-serine dehydratase 1 (442 aa).

An N6-(pyridoxal phosphate)lysine modification is found at Lys118.

Belongs to the serine/threonine dehydratase family. DsdA subfamily. In terms of assembly, monomer. The cofactor is pyridoxal 5'-phosphate.

It carries out the reaction D-serine = pyruvate + NH4(+). The sequence is that of D-serine dehydratase 1 from Escherichia coli (strain UTI89 / UPEC).